Consider the following 444-residue polypeptide: Phosphoribosylamine--glycine ligase (444 aa).

The region spanning 109 to 324 (RNLFKKYEID…FLDVCFAIAE (216 aa)) is the ATP-grasp domain. 140 to 202 (MTSLGKDVVV…EEKLVGVEFT (63 aa)) is a binding site for ATP. Mg(2+)-binding residues include Q282, E294, and N296. The Mn(2+) site is built by Q282, E294, and N296.

This sequence belongs to the GARS family. Mg(2+) is required as a cofactor. Requires Mn(2+) as cofactor.

It catalyses the reaction 5-phospho-beta-D-ribosylamine + glycine + ATP = N(1)-(5-phospho-beta-D-ribosyl)glycinamide + ADP + phosphate + H(+). The protein operates within purine metabolism; IMP biosynthesis via de novo pathway; N(1)-(5-phospho-D-ribosyl)glycinamide from 5-phospho-alpha-D-ribose 1-diphosphate: step 2/2. This chain is Phosphoribosylamine--glycine ligase, found in Methanococcus maripaludis (strain C7 / ATCC BAA-1331).